Consider the following 975-residue polypeptide: Protein bicaudal D homolog 1 (975 aa).

Coiled coils occupy residues 1-265 and 319-496; these read MAAE…HISI and SELN…IANE. Disordered regions lie at residues 383-403, 545-616, 800-824, 836-877, and 922-975; these read SSKELKAELDGEKGRDSGEEA, RSGS…LDTS, DHEQSRRSKGKLGKSKIGSPKVSGE, LLHS…ASYL, and DCQQ…PPHP. Basic and acidic residues-rich tracts occupy residues 385 to 403 and 581 to 590; these read KELKAELDGEKGRDSGEEA and VAKESTEASK. Positions 592–602 are enriched in polar residues; the sequence is PSPTKTPTISP. Residues 663 to 803 are a coiled coil; it reads IDKDKEALME…LEDLEFDHEQ (141 aa). Positions 663–803 are interaction with RAB6A; that stretch reads IDKDKEALME…LEDLEFDHEQ (141 aa). Residues 840 to 877 are compositionally biased toward polar residues; the sequence is QGPQTPNIRVSSGTQRKRQFSPSLCDQSRPRTSGASYL.

The protein belongs to the BicD family. In terms of assembly, interacts with RAB6A. Interacts (via C-terminus) with RAB6B (GTP-bound); the interaction is direct. Interacts with CLIP-115 and KIFC2. (Microbial infection) Interacts with human cytomegalovirus/HHV-5 protein UL32. In terms of tissue distribution, expressed in the brain, heart and skeletal muscle.

The protein localises to the golgi apparatus. In terms of biological role, regulates coat complex coatomer protein I (COPI)-independent Golgi-endoplasmic reticulum transport by recruiting the dynein-dynactin motor complex. This is Protein bicaudal D homolog 1 (BICD1) from Homo sapiens (Human).